Reading from the N-terminus, the 234-residue chain is Melanoregulin (234 aa).

The segment at 215-234 is disordered; the sequence is MNQNISGGEDEDEDESEPDD. Acidic residues predominate over residues 222-234; the sequence is GEDEDEDESEPDD.

This sequence belongs to the melanoregulin family.

The protein localises to the apical cell membrane. It localises to the melanosome membrane. It is found in the lysosome membrane. The protein resides in the cytoplasmic vesicle membrane. Its function is as follows. Probably functions as a cargo-recognition protein that couples cytoplasmic vesicles to the transport machinery. Contributes to retrograde melanosome transport from the cell periphery to the center. Overexpression causes accumulation of late endosomes and/or lysosomes at the microtubule organising center (MTOC) at the center of the cell. Probably binds cholesterol and requires the presence of cholesterol in membranes to function in microtubule-mediated retrograde organelle transport. Binds phosphatidylinositol 3-phosphate, phosphatidylinositol 4-phosphate, phosphatidylinositol 5-phosphate and phosphatidylinositol 3,5-bisphosphate. The polypeptide is Melanoregulin (mreg) (Danio rerio (Zebrafish)).